Here is a 424-residue protein sequence, read N- to C-terminus: PtdIns3K complex I subunit atg38 (424 aa).

Residues 50-78 (LIKRCANNQIEELMVRIRELRESLPNKQT) are a coiled coil. Positions 73–212 (LPNKQTPISM…DPAYQNTNEQ (140 aa)) are required for interaction with atg8. Positions 178–181 (FLIV) match the AIM motif. Residues 268–284 (LSEEEMGRSHKREESFK) are compositionally biased toward basic and acidic residues. Positions 268-299 (LSEEEMGRSHKREESFKRAFGHASSSESSIGE) are disordered. A coiled-coil region spans residues 390–420 (TVDSQLKIKQLETQIATLQKQLEQFQTSTLD).

It belongs to the ATG38 family. In terms of assembly, component of the autophagy-specific vps34 PI3-kinase complex I composed of vps15, atg6, pik3/vps34, atg14 and atg38. Interacts (via AIM motif) with atg8; the interaction is direct and leads to recruitment of the autophagy-specific vps34 PI3-kinase complex I to the phagophore assembly site.

It localises to the preautophagosomal structure membrane. The protein resides in the cytoplasm. It is found in the cytosol. Functions as a part of the autophagy-specific VPS34 PI3-kinase complex I that plays a role in autophagosome assembly. This complex is essential to recruit the atg8-phosphatidylinositol conjugate and the atg12-atg5 conjugate to the pre-autophagosomal structure. By binding to atg8 at the phagophore assembly site, atg38 helps establish a positive feedback loop for recruitment of phagophore assembly proteins, including atg8. The sequence is that of PtdIns3K complex I subunit atg38 from Schizosaccharomyces pombe (strain 972 / ATCC 24843) (Fission yeast).